The sequence spans 540 residues: Calnexin homolog (540 aa).

An N-terminal signal peptide occupies residues 1-29; sequence MELSRRKMCCYIQFCCFVLIGCFISQICA. At 30–469 the chain is on the lumenal side; the sequence is SSDAIFYESF…EKAETQPNIT (440 aa). Ca(2+) is bound by residues Ser38 and Asp69. Residues Cys112 and Cys147 are joined by a disulfide bond. An alpha-D-glucoside-binding residues include Tyr116, Lys118, Tyr138, and Asp145. The segment at 221-301 is disordered; that stretch reads LIPTKTIPDP…DWDDEEDGEW (81 aa). Residues 227-360 are p domain (Extended arm); it reads IPDPDDKKPE…REIPNPDYFE (134 aa). The segment covering 228–253 has biased composition (basic and acidic residues); sequence PDPDDKKPEDWDERAKIPDPEATKPD. Tandem repeats lie at residues 229 to 240, 246 to 257, 265 to 276, 284 to 295, and 299 to 309. 4 X approximate repeats stretches follow at residues 229-295 and 299-356; these read DPDD…DWDD and GEWE…IPNP. Composition is skewed to acidic residues over residues 254-285 and 292-301; these read DWDE…IDDP and DWDDEEDGEW. An intrachain disulfide couples Cys311 to Cys317. Tandem repeats lie at residues 318-328, 332-342, and 346-356. Residue Glu375 participates in an alpha-D-glucoside binding. Position 386 (Asp386) interacts with Ca(2+). Asn467 carries an N-linked (GlcNAc...) asparagine glycan. Residues 470-490 traverse the membrane as a helical segment; it reads IGVIVSIIVVIFSILLKLLFG. Residues 491-540 lie on the Cytoplasmic side of the membrane; that stretch reads GKKAAPKVNVVPKKKEEPEASNTAEVREGEEEKTEGEVAAAPRRRPRRDT. The segment at 499–540 is disordered; that stretch reads NVVPKKKEEPEASNTAEVREGEEEKTEGEVAAAPRRRPRRDT.

This sequence belongs to the calreticulin family.

The protein resides in the endoplasmic reticulum membrane. Functionally, calcium-binding protein that interacts with newly synthesized monoglucosylated glycoproteins in the endoplasmic reticulum. It may act in assisting protein assembly and/or in the retention within the ER of unassembled protein subunits. It seems to play a major role in the quality control apparatus of the ER by the retention of incorrectly folded proteins. The protein is Calnexin homolog of Helianthus tuberosus (Jerusalem artichoke).